The primary structure comprises 904 residues: Shieldin complex subunit 2 (904 aa).

The sufficient for interaction with SHLD3 and MAD2L2 stretch occupies residues 1–60 (MSGGSQVHIFWGAPVAPLKMTVSQDTASLMSVADPWKKIHLLYSQHSLYLKDEKQHKNLE). Residues 1 to 568 (MSGGSQVHIF…AYVSSKHSYL (568 aa)) form an interaction with ASTE1 region. The mediates interaction with SHLD1 stretch occupies residues 721–891 (KCSGVVLIQA…LQQDFSLLDF (171 aa)).

This sequence belongs to the SHLD2 family. Component of the shieldin complex, consisting of SHLD1, SHLD2, SHLD3 and MAD2L2/REV7. Within the complex, SHLD2 forms a scaffold which interacts with a SHLD3-MAD2L2 subcomplex via its N-terminus, and with SHLD1 via its C-terminus. Interacts with TP53BP1. Interacts with RIF1. Interacts with ASTE1.

It localises to the chromosome. In terms of biological role, component of the shieldin complex, which plays an important role in repair of DNA double-stranded breaks (DSBs). During G1 and S phase of the cell cycle, the complex functions downstream of TP53BP1 to promote non-homologous end joining (NHEJ) and suppress DNA end resection. Mediates various NHEJ-dependent processes including immunoglobulin class-switch recombination, and fusion of unprotected telomeres. The polypeptide is Shieldin complex subunit 2 (Pongo abelii (Sumatran orangutan)).